Consider the following 80-residue polypeptide: Cell division protein ZapB (80 aa).

Positions 3–80 (FEVLEQLEAK…NLLGKMDDVE (78 aa)) form a coiled coil.

This sequence belongs to the ZapB family. As to quaternary structure, homodimer. The ends of the coiled-coil dimer bind to each other, forming polymers. Interacts with FtsZ.

The protein localises to the cytoplasm. Its function is as follows. Non-essential, abundant cell division factor that is required for proper Z-ring formation. It is recruited early to the divisome by direct interaction with FtsZ, stimulating Z-ring assembly and thereby promoting cell division earlier in the cell cycle. Its recruitment to the Z-ring requires functional FtsA or ZipA. The chain is Cell division protein ZapB from Vibrio atlanticus (strain LGP32) (Vibrio splendidus (strain Mel32)).